We begin with the raw amino-acid sequence, 196 residues long: Heat shock protein beta-8 (196 aa).

The segment at Met1 to Ser28 is disordered. Residues Ser24 and Ser57 each carry the phosphoserine modification. At Thr63 the chain carries Phosphothreonine. 2 positions are modified to asymmetric dimethylarginine: Arg71 and Arg78. The region spanning Arg78–Glu185 is the sHSP domain. Phosphoserine is present on Ser87. The segment at Pro176–Ser196 is disordered. Residues Gly178–Ser196 show a composition bias toward polar residues.

Belongs to the small heat shock protein (HSP20) family. In terms of assembly, monomer. Forms a ternary complex with BAG3 and HSPA1A. Component of the chaperone-assisted selective autophagy (CASA) complex consisting of BAG3, HSPA8/HSC70, HSPB8 and STUB1/CHIP. Interacts with HSPB1. Interacts with DNAJB6. Interacts with BAG3. In terms of tissue distribution, highly expressed in skeletal muscle, heart, uterus, liver, lung and ovary. Low levels found in stomach and brain. Not detected in small intestine, large intestine, kidney, spleen and testis. In the ovary, expression is concentrated in the endometrium and in the connective tissue between the circular and longitudinal muscles of the myometrium.

It localises to the cytoplasm. The protein localises to the nucleus. In terms of biological role, involved in the chaperone-assisted selective autophagy (CASA), a crucial process for protein quality control, particularly in mechanical strained cells and tissues such as muscle. Displays temperature-dependent chaperone activity. The polypeptide is Heat shock protein beta-8 (Hspb8) (Mus musculus (Mouse)).